The sequence spans 246 residues: 5'-nucleotidase SurE (246 aa).

Residues D8, D9, S39, and N91 each coordinate a divalent metal cation.

This sequence belongs to the SurE nucleotidase family. Requires a divalent metal cation as cofactor.

The protein resides in the cytoplasm. It catalyses the reaction a ribonucleoside 5'-phosphate + H2O = a ribonucleoside + phosphate. In terms of biological role, nucleotidase that shows phosphatase activity on nucleoside 5'-monophosphates. In Histophilus somni (strain 129Pt) (Haemophilus somnus), this protein is 5'-nucleotidase SurE.